A 428-amino-acid polypeptide reads, in one-letter code: Patatin-like protein 3 (428 aa).

The region spanning 38–252 is the PNPLA domain; it reads LSIDGGGIRG…AANNPTLCAI (215 aa). A GXGXXG motif is present at residues 42 to 47; that stretch reads GGGIRG. Residues 80–84 carry the GXSXG motif; the sequence is GTSTG. Serine 82 acts as the Nucleophile in catalysis. The Proton acceptor role is filled by aspartate 239. The DGA/G signature appears at 239–241; it reads DGG. The residue at position 423 (serine 423) is a Phosphoserine.

The protein belongs to the patatin family. Expressed specifically in the stigma, ovary and funiculus of the ovary.

The protein resides in the cytoplasm. Possesses non-specific lipolytic acyl hydrolase (LAH) activity. Catalyzes the hydrolysis of the neutral lipids monogalactosyldiacylglycerol (MGDG), digalactosyldiacylglycerol (DGDG) and phosphatidylglycerol (PG), and less efficiently the polar lipids phosphatidylcholine (PC) and phosphatidylinositol (PI), but not the storage lipid triacylglycerol (TAG). May play a role in root development. The polypeptide is Patatin-like protein 3 (PLP3) (Arabidopsis thaliana (Mouse-ear cress)).